We begin with the raw amino-acid sequence, 317 residues long: E3 ubiquitin-protein ligase NRDP1 (317 aa).

The RING-type; degenerate zinc-finger motif lies at 18–57 (CPICSGVLEEPVQAPHCEHAFCNACITQWFSQQQTCPVDR). Residues 135 to 175 (IKHLRSVVQQQQIRIGELEKTAAESKHQLSEQKRDIQLLKA) are a coiled coil.

It carries out the reaction S-ubiquitinyl-[E2 ubiquitin-conjugating enzyme]-L-cysteine + [acceptor protein]-L-lysine = [E2 ubiquitin-conjugating enzyme]-L-cysteine + N(6)-ubiquitinyl-[acceptor protein]-L-lysine.. It functions in the pathway protein modification; protein ubiquitination. Its function is as follows. Acts as E3 ubiquitin-protein ligase and regulates the degradation of target proteins. The polypeptide is E3 ubiquitin-protein ligase NRDP1 (rnf41) (Xenopus laevis (African clawed frog)).